Here is a 95-residue protein sequence, read N- to C-terminus: Fungal defensin plectasin (95 aa).

A signal peptide spans 1 to 23 (MQFTTILSIGITVFGLLNTGAFA). The propeptide occupies 24-55 (APQPVPEAYAVSDPEAHPDDFAGMDANQLQKR). Beta-D-GlcNAc-(1-&gt;4)-Mur2Ac(oyl-L-Ala-gamma-D-Glu-L-Lys-D-Ala-D-Ala)-di-trans,octa-cis-undecaprenyl diphosphate-binding residues include Phe57, Gly58, and Cys59. 3 disulfides stabilise this stretch: Cys59–Cys85, Cys70–Cys92, and Cys74–Cys94. A binds to membrane interface region spans residues 61-64 (GPWD). Beta-D-GlcNAc-(1-&gt;4)-Mur2Ac(oyl-L-Ala-gamma-D-Glu-L-Lys-D-Ala-D-Ala)-di-trans,octa-cis-undecaprenyl diphosphate-binding residues include Asp67, His73, Tyr84, Ala86, Gly88, Cys92, and Lys93. The segment at 86-92 (AKGGFVC) is binds to membrane interface.

Belongs to the invertebrate defensin family. Type 2 subfamily.

The protein resides in the secreted. It is found in the host cell membrane. Its function is as follows. Antimicrobial peptide that potently acts against several species of Gram-positive bacteria. It selectively inhibits peptidoglycan biosynthesis through complex formation with the cell wall precursor lipid II (1:1 molar ratio) thus inhibiting cell wall synthesis. It does not disrupt cell membranes. Is especially active against numerous clinical isolates of S.pneumoniae, including all 90 different serotypes and isolates resistant to clinically used antibiotics. In vitro, shows considerable selectivity for bacteria over mammalian cells. The peptide synthesized in D-amino acids does not show antibacterial activity. In vitro, acts on voltage-gated potassium channels by moderately inhibiting mammalian Kv1.3/KCNA3 (IC(50)=2.8 uM), and moderately inhibiting others potassium channels. The polypeptide is Fungal defensin plectasin (DEF) (Pseudoplectania nigrella (Ebony cup)).